A 361-amino-acid chain; its full sequence is Phospho-N-acetylmuramoyl-pentapeptide-transferase (361 aa).

10 helical membrane-spanning segments follow: residues Arg-25 to Ile-45, Thr-73 to Leu-93, Val-98 to Ile-118, Ile-139 to Thr-159, Ile-168 to Phe-188, Gly-200 to Ser-220, Ala-237 to Phe-257, Val-264 to Ile-284, Met-289 to Val-309, and Val-339 to Lys-359.

This sequence belongs to the glycosyltransferase 4 family. MraY subfamily. Requires Mg(2+) as cofactor.

The protein resides in the cell inner membrane. The catalysed reaction is UDP-N-acetyl-alpha-D-muramoyl-L-alanyl-gamma-D-glutamyl-meso-2,6-diaminopimeloyl-D-alanyl-D-alanine + di-trans,octa-cis-undecaprenyl phosphate = di-trans,octa-cis-undecaprenyl diphospho-N-acetyl-alpha-D-muramoyl-L-alanyl-D-glutamyl-meso-2,6-diaminopimeloyl-D-alanyl-D-alanine + UMP. It participates in cell wall biogenesis; peptidoglycan biosynthesis. Catalyzes the initial step of the lipid cycle reactions in the biosynthesis of the cell wall peptidoglycan: transfers peptidoglycan precursor phospho-MurNAc-pentapeptide from UDP-MurNAc-pentapeptide onto the lipid carrier undecaprenyl phosphate, yielding undecaprenyl-pyrophosphoryl-MurNAc-pentapeptide, known as lipid I. In Xanthomonas axonopodis pv. citri (strain 306), this protein is Phospho-N-acetylmuramoyl-pentapeptide-transferase.